We begin with the raw amino-acid sequence, 393 residues long: Riboflavin biosynthesis protein RibBA (393 aa).

The interval 1–200 (MQFDNIDSAL…IDDLIEYRKK (200 aa)) is DHBP synthase. Residues 27 to 28 (RE), D32, 139 to 143 (RNGHT), and E163 each bind D-ribulose 5-phosphate. E28 contributes to the Mg(2+) binding site. Mg(2+) is bound at residue H142. Residues 201–393 (LEPEIEFKAK…TKKIKMGHLI (193 aa)) are GTP cyclohydrolase II. Residue 249–253 (RLHSA) participates in GTP binding. The Zn(2+) site is built by C254, C265, and C267. GTP contacts are provided by residues Q270, 291-293 (EGR), and T313. The active-site Proton acceptor; for GTP cyclohydrolase activity is D325. R327 functions as the Nucleophile; for GTP cyclohydrolase activity in the catalytic mechanism. GTP-binding residues include S348 and K353.

It in the N-terminal section; belongs to the DHBP synthase family. This sequence in the C-terminal section; belongs to the GTP cyclohydrolase II family. Requires Mg(2+) as cofactor. The cofactor is Mn(2+). It depends on Zn(2+) as a cofactor.

The catalysed reaction is D-ribulose 5-phosphate = (2S)-2-hydroxy-3-oxobutyl phosphate + formate + H(+). The enzyme catalyses GTP + 4 H2O = 2,5-diamino-6-hydroxy-4-(5-phosphoribosylamino)-pyrimidine + formate + 2 phosphate + 3 H(+). It participates in cofactor biosynthesis; riboflavin biosynthesis; 2-hydroxy-3-oxobutyl phosphate from D-ribulose 5-phosphate: step 1/1. The protein operates within cofactor biosynthesis; riboflavin biosynthesis; 5-amino-6-(D-ribitylamino)uracil from GTP: step 1/4. Catalyzes the conversion of D-ribulose 5-phosphate to formate and 3,4-dihydroxy-2-butanone 4-phosphate. Its function is as follows. Catalyzes the conversion of GTP to 2,5-diamino-6-ribosylamino-4(3H)-pyrimidinone 5'-phosphate (DARP), formate and pyrophosphate. This is Riboflavin biosynthesis protein RibBA from Staphylococcus aureus (strain MRSA252).